Consider the following 415-residue polypeptide: Fructose-like permease IIC component 1 (415 aa).

At 1–46 the chain is on the cytoplasmic side; that stretch reads MAIKKRSATVVPGASGAAAAVKNPQASKTSFWGELPQHVMSGISRM. The PTS EIIC type-2 domain maps to 35-410; that stretch reads LPQHVMSGIS…RLMMFRKGKL (376 aa). Residues 47–67 traverse the membrane as a helical segment; the sequence is VPTLIMGGVILAFSQLIAYSW. Topologically, residues 68-101 are periplasmic; that stretch reads LKIPAEIGIMDALNSGKFSGFDLSLLKFAWLSQS. Residues 102-122 form a helical membrane-spanning segment; the sequence is FGGVLFGFAIPMFAAFVANSI. Over 123-126 the chain is Cytoplasmic; sequence GGKL. The helical transmembrane segment at 127–147 threads the bilayer; the sequence is AFPAGFIGGLMSTQPTQLLNF. Topologically, residues 148 to 157 are periplasmic; that stretch reads DPSTMQWATS. Residues 158–178 traverse the membrane as a helical segment; sequence SPVPSTFIGALIISIVAGYLV. Residues 179 to 197 are Cytoplasmic-facing; that stretch reads KWMNQKIQLPDFLLAFKTT. Residues 198–218 traverse the membrane as a helical segment; it reads FLLPILSAIFVMLAMYYVITP. Topologically, residues 219–237 are periplasmic; sequence FGGWINGGIRTVLTAAGEK. The chain crosses the membrane as a helical span at residues 238 to 258; sequence GALMYAMGIAAATAIDLGGPI. Topologically, residues 259–276 are cytoplasmic; it reads NKAAGFVAFSFTTDHVLP. Residues 277 to 297 form a helical membrane-spanning segment; that stretch reads VTARSIAIVIPPIGLGLATII. Topologically, residues 298-318 are periplasmic; sequence DRRLTGKRLFNAQLYPQGKTA. Residues 319–339 traverse the membrane as a helical segment; that stretch reads MFLAFMGISEGAIPFALESPI. Over 340–341 the chain is Cytoplasmic; the sequence is TA. A helical membrane pass occupies residues 342–362; the sequence is IPSYMVGAIVGSTAAVWLGAV. Topologically, residues 363–378 are periplasmic; the sequence is QWFPESAIWAWPLVTN. Residues 379–399 traverse the membrane as a helical segment; that stretch reads LGVYMAGIALGAVITALMVVF. Topologically, residues 400–415 are cytoplasmic; it reads LRLMMFRKGKLLIDSL.

The protein resides in the cell inner membrane. In terms of biological role, the phosphoenolpyruvate-dependent sugar phosphotransferase system (PTS), a major carbohydrate active -transport system, catalyzes the phosphorylation of incoming sugar substrates concomitant with their translocation across the cell membrane. The sequence is that of Fructose-like permease IIC component 1 (fryC) from Escherichia coli (strain K12).